Consider the following 263-residue polypeptide: Purine nucleoside phosphorylase SERP0752 (263 aa).

3 residues coordinate Zn(2+): H79, C124, and H141.

The protein belongs to the purine nucleoside phosphorylase YfiH/LACC1 family. In terms of assembly, homodimer. Cu(2+) is required as a cofactor. Requires Zn(2+) as cofactor.

It catalyses the reaction adenosine + phosphate = alpha-D-ribose 1-phosphate + adenine. The enzyme catalyses S-methyl-5'-thioadenosine + phosphate = 5-(methylsulfanyl)-alpha-D-ribose 1-phosphate + adenine. The catalysed reaction is inosine + phosphate = alpha-D-ribose 1-phosphate + hypoxanthine. It carries out the reaction adenosine + H2O + H(+) = inosine + NH4(+). Functionally, purine nucleoside enzyme that catalyzes the phosphorolysis of adenosine and inosine nucleosides, yielding D-ribose 1-phosphate and the respective free bases, adenine and hypoxanthine. Also catalyzes the phosphorolysis of S-methyl-5'-thioadenosine into adenine and S-methyl-5-thio-alpha-D-ribose 1-phosphate. Also has adenosine deaminase activity. The chain is Purine nucleoside phosphorylase SERP0752 from Staphylococcus epidermidis (strain ATCC 35984 / DSM 28319 / BCRC 17069 / CCUG 31568 / BM 3577 / RP62A).